The primary structure comprises 326 residues: tRNA-cytidine(32) 2-sulfurtransferase (326 aa).

Residues 63–68 carry the PP-loop motif motif; sequence SGGKDS. The [4Fe-4S] cluster site is built by cysteine 138, cysteine 141, and cysteine 229.

The protein belongs to the TtcA family. In terms of assembly, homodimer. The cofactor is Mg(2+). [4Fe-4S] cluster is required as a cofactor.

Its subcellular location is the cytoplasm. It carries out the reaction cytidine(32) in tRNA + S-sulfanyl-L-cysteinyl-[cysteine desulfurase] + AH2 + ATP = 2-thiocytidine(32) in tRNA + L-cysteinyl-[cysteine desulfurase] + A + AMP + diphosphate + H(+). It participates in tRNA modification. In terms of biological role, catalyzes the ATP-dependent 2-thiolation of cytidine in position 32 of tRNA, to form 2-thiocytidine (s(2)C32). The sulfur atoms are provided by the cysteine/cysteine desulfurase (IscS) system. The protein is tRNA-cytidine(32) 2-sulfurtransferase of Leptothrix cholodnii (strain ATCC 51168 / LMG 8142 / SP-6) (Leptothrix discophora (strain SP-6)).